Here is a 432-residue protein sequence, read N- to C-terminus: D-amino acid dehydrogenase (432 aa).

Residue 3–17 (VVILGSGVVGVASAW) participates in FAD binding.

The protein belongs to the DadA oxidoreductase family. The cofactor is FAD.

The catalysed reaction is a D-alpha-amino acid + A + H2O = a 2-oxocarboxylate + AH2 + NH4(+). It functions in the pathway amino-acid degradation; D-alanine degradation; NH(3) and pyruvate from D-alanine: step 1/1. Its function is as follows. Oxidative deamination of D-amino acids. The protein is D-amino acid dehydrogenase of Shigella boydii serotype 18 (strain CDC 3083-94 / BS512).